Here is a 151-residue protein sequence, read N- to C-terminus: Small ribosomal subunit protein eS6 (151 aa).

The protein belongs to the eukaryotic ribosomal protein eS6 family.

The polypeptide is Small ribosomal subunit protein eS6 (Pyrobaculum calidifontis (strain DSM 21063 / JCM 11548 / VA1)).